The sequence spans 255 residues: MSRRRRIYEGKAKVLYEGPEPGTLIQHFKDDATAFNAKKHQVIEGKGVLNNRISEYLFQHLNDIGVPTHFIRRLNMREQLIREVEIVPLEVVVRNVAAGSLSQRLGIEEGTQLPRSIIEFYYKNDQLNDPMVSEEHITAFGWATPQEIDDIMALAIRVNDFLTGLFLGIGIRLVDFKMECGRLFENEMMRIIVADEISPDSCRLWDIKSNEKLDKDRFRRDLGGLLEAYTEVAKRLGILMENERPAGSGPVLVKS.

It belongs to the SAICAR synthetase family.

It catalyses the reaction 5-amino-1-(5-phospho-D-ribosyl)imidazole-4-carboxylate + L-aspartate + ATP = (2S)-2-[5-amino-1-(5-phospho-beta-D-ribosyl)imidazole-4-carboxamido]succinate + ADP + phosphate + 2 H(+). Its pathway is purine metabolism; IMP biosynthesis via de novo pathway; 5-amino-1-(5-phospho-D-ribosyl)imidazole-4-carboxamide from 5-amino-1-(5-phospho-D-ribosyl)imidazole-4-carboxylate: step 1/2. The protein is Phosphoribosylaminoimidazole-succinocarboxamide synthase A (purC1) of Bradyrhizobium diazoefficiens (strain JCM 10833 / BCRC 13528 / IAM 13628 / NBRC 14792 / USDA 110).